The sequence spans 539 residues: Chaperonin GroEL (539 aa).

Residues 29 to 32 (TIGP), 86 to 90 (DGTTT), Gly414, and Asp493 contribute to the ATP site.

It belongs to the chaperonin (HSP60) family. As to quaternary structure, forms a cylinder of 14 subunits composed of two heptameric rings stacked back-to-back. Interacts with the co-chaperonin GroES.

The protein localises to the cytoplasm. The catalysed reaction is ATP + H2O + a folded polypeptide = ADP + phosphate + an unfolded polypeptide.. Its function is as follows. Together with its co-chaperonin GroES, plays an essential role in assisting protein folding. The GroEL-GroES system forms a nano-cage that allows encapsulation of the non-native substrate proteins and provides a physical environment optimized to promote and accelerate protein folding. The chain is Chaperonin GroEL from Staphylococcus aureus.